A 210-amino-acid polypeptide reads, in one-letter code: Putative 3-methyladenine DNA glycosylase (210 aa).

The interval 180 to 210 (SRPPPGAAAARAARAPAAPAPRPRRPRGSGP) is disordered. The segment covering 186-196 (AAAARAARAPA) has biased composition (low complexity). The span at 201–210 (RPRRPRGSGP) shows a compositional bias: basic residues.

The protein belongs to the DNA glycosylase MPG family.

This Anaeromyxobacter dehalogenans (strain 2CP-1 / ATCC BAA-258) protein is Putative 3-methyladenine DNA glycosylase.